A 917-amino-acid polypeptide reads, in one-letter code: Hexokinase-2 (917 aa).

Met-1 is modified (N-acetylmethionine). Residues 1–16 (MIASHLLAYFFTELNH) are mitochondrial-binding peptide (MBP). Hexokinase domains follow at residues 16–458 (HDQV…MVTA) and 464–906 (AYQH…LITA). Residues Arg-30 and 84–89 (DLGGTN) contribute to the ATP site. Residues 73–207 (DGTEHGEFLA…DFDIDIVAMV (135 aa)) form a hexokinase small subdomain 1 region. 84-88 (DLGGT) serves as a coordination point for D-glucose 6-phosphate. D-glucose is bound by residues 155 to 156 (SF), 172 to 173 (TK), 208 to 209 (ND), Asn-235, Glu-260, and 291 to 294 (QLFE). The interval 208–447 (NDTVATMMTC…CDIRFLCSED (240 aa)) is hexokinase large subdomain 1. Asp-209 lines the D-glucose 6-phosphate pocket. Residue 413 to 415 (DGS) participates in D-glucose 6-phosphate binding. 425 to 426 (KR) is a binding site for ATP. Residues Ser-449 and 532–536 (DLGGT) each bind D-glucose 6-phosphate. A hexokinase small subdomain 2 region spans residues 521–655 (DGTEKGDFLA…EFDLDVVAVV (135 aa)). 532–537 (DLGGTN) provides a ligand contact to ATP. Residues 603–604 (SF), 620–621 (TK), and 656–657 (ND) contribute to the D-glucose site. Positions 656–895 (NDTVGTMMTC…CDVSFLESED (240 aa)) are hexokinase large subdomain 2. The D-glucose 6-phosphate site is built by Asp-657 and Thr-680. Thr-680 serves as a coordination point for ATP. Residues 682-683 (SN), Glu-708, and 739-742 (QRFE) each bind D-glucose. ATP contacts are provided by residues 747-748 (GM), 784-788 (TKFLS), and 863-867 (TLYKL). Residues 861–863 (DGT) and Ser-897 contribute to the D-glucose 6-phosphate site.

This sequence belongs to the hexokinase family. As to quaternary structure, monomer. Interacts with TIGAR; the interaction increases hexokinase activity in a hypoxia- and HIF1A-dependent manner.

The protein resides in the mitochondrion outer membrane. The protein localises to the cytoplasm. It is found in the cytosol. The enzyme catalyses a D-hexose + ATP = a D-hexose 6-phosphate + ADP + H(+). It catalyses the reaction D-fructose + ATP = D-fructose 6-phosphate + ADP + H(+). The catalysed reaction is D-glucose + ATP = D-glucose 6-phosphate + ADP + H(+). It participates in carbohydrate metabolism; hexose metabolism. The protein operates within carbohydrate degradation; glycolysis; D-glyceraldehyde 3-phosphate and glycerone phosphate from D-glucose: step 1/4. Its activity is regulated as follows. Hexokinase activity is specifically inhibited by 2,6-disubstituted glucosamines. Catalyzes the phosphorylation of hexose, such as D-glucose and D-fructose, to hexose 6-phosphate (D-glucose 6-phosphate and D-fructose 6-phosphate, respectively). Mediates the initial step of glycolysis by catalyzing phosphorylation of D-glucose to D-glucose 6-phosphate. Plays a key role in maintaining the integrity of the outer mitochondrial membrane by preventing the release of apoptogenic molecules from the intermembrane space and subsequent apoptosis. In Equus zebra (Mountain zebra), this protein is Hexokinase-2.